We begin with the raw amino-acid sequence, 346 residues long: Holliday junction branch migration complex subunit RuvB (346 aa).

Residues 1-181 (MSDRNPLIDA…FGIPTRLNFY (181 aa)) are large ATPase domain (RuvB-L). ATP-binding positions include Leu20, Arg21, Gly62, Lys65, Thr66, Thr67, 128–130 (EDF), Arg171, Tyr181, and Arg218. A Mg(2+)-binding site is contributed by Thr66. The tract at residues 182 to 252 (TVEELEYIVR…IADEALSRLE (71 aa)) is small ATPAse domain (RuvB-S). Residues 255–346 (NRGLDQLDRR…SQYGLFMEDE (92 aa)) are head domain (RuvB-H). DNA is bound by residues Arg291, Arg310, and Arg315.

It belongs to the RuvB family. As to quaternary structure, homohexamer. Forms an RuvA(8)-RuvB(12)-Holliday junction (HJ) complex. HJ DNA is sandwiched between 2 RuvA tetramers; dsDNA enters through RuvA and exits via RuvB. An RuvB hexamer assembles on each DNA strand where it exits the tetramer. Each RuvB hexamer is contacted by two RuvA subunits (via domain III) on 2 adjacent RuvB subunits; this complex drives branch migration. In the full resolvosome a probable DNA-RuvA(4)-RuvB(12)-RuvC(2) complex forms which resolves the HJ.

It localises to the cytoplasm. It carries out the reaction ATP + H2O = ADP + phosphate + H(+). In terms of biological role, the RuvA-RuvB-RuvC complex processes Holliday junction (HJ) DNA during genetic recombination and DNA repair, while the RuvA-RuvB complex plays an important role in the rescue of blocked DNA replication forks via replication fork reversal (RFR). RuvA specifically binds to HJ cruciform DNA, conferring on it an open structure. The RuvB hexamer acts as an ATP-dependent pump, pulling dsDNA into and through the RuvAB complex. RuvB forms 2 homohexamers on either side of HJ DNA bound by 1 or 2 RuvA tetramers; 4 subunits per hexamer contact DNA at a time. Coordinated motions by a converter formed by DNA-disengaged RuvB subunits stimulates ATP hydrolysis and nucleotide exchange. Immobilization of the converter enables RuvB to convert the ATP-contained energy into a lever motion, pulling 2 nucleotides of DNA out of the RuvA tetramer per ATP hydrolyzed, thus driving DNA branch migration. The RuvB motors rotate together with the DNA substrate, which together with the progressing nucleotide cycle form the mechanistic basis for DNA recombination by continuous HJ branch migration. Branch migration allows RuvC to scan DNA until it finds its consensus sequence, where it cleaves and resolves cruciform DNA. The protein is Holliday junction branch migration complex subunit RuvB of Brucella anthropi (strain ATCC 49188 / DSM 6882 / CCUG 24695 / JCM 21032 / LMG 3331 / NBRC 15819 / NCTC 12168 / Alc 37) (Ochrobactrum anthropi).